The chain runs to 469 residues: 3-isopropylmalate dehydratase large subunit (469 aa).

[4Fe-4S] cluster is bound by residues C347, C408, and C411.

Belongs to the aconitase/IPM isomerase family. LeuC type 1 subfamily. As to quaternary structure, heterodimer of LeuC and LeuD. [4Fe-4S] cluster serves as cofactor.

It catalyses the reaction (2R,3S)-3-isopropylmalate = (2S)-2-isopropylmalate. Its pathway is amino-acid biosynthesis; L-leucine biosynthesis; L-leucine from 3-methyl-2-oxobutanoate: step 2/4. In terms of biological role, catalyzes the isomerization between 2-isopropylmalate and 3-isopropylmalate, via the formation of 2-isopropylmaleate. The sequence is that of 3-isopropylmalate dehydratase large subunit from Haemophilus influenzae (strain 86-028NP).